The chain runs to 287 residues: ATP synthase gamma chain (287 aa).

Belongs to the ATPase gamma chain family. F-type ATPases have 2 components, CF(1) - the catalytic core - and CF(0) - the membrane proton channel. CF(1) has five subunits: alpha(3), beta(3), gamma(1), delta(1), epsilon(1). CF(0) has three main subunits: a, b and c.

The protein resides in the cell inner membrane. Its function is as follows. Produces ATP from ADP in the presence of a proton gradient across the membrane. The gamma chain is believed to be important in regulating ATPase activity and the flow of protons through the CF(0) complex. The sequence is that of ATP synthase gamma chain from Xanthomonas campestris pv. campestris (strain B100).